Here is a 464-residue protein sequence, read N- to C-terminus: Vacuolar protein sorting-associated protein atg6 (464 aa).

The interval Ser-38–Glu-57 is disordered. Positions Val-144 to Lys-274 form a coiled coil. The interval Met-275–Gln-461 is BARA.

The protein belongs to the beclin family. As to quaternary structure, component of the autophagy-specific vps34 PI3-kinase complex I composed of vps15, atg6, pik3/vps34, atg14 and atg38. Also a component of the vps34 PI3-kinase complex II composed of atg6, pik3, vps15 and vps38.

It localises to the endosome membrane. Its subcellular location is the vacuole membrane. The protein localises to the preautophagosomal structure membrane. It is found in the cytoplasm. Functions as a part of the autophagy-specific VPS34 PI3-kinase complex I that plays a role in autophagosome assembly. This complex is essential to recruit the atg8-phosphatidylinositol conjugate and the atg12-atg5 conjugate to the pre-autophagosomal structure. Also functions as part of the VPS34 PI3-kinase complex II. The sequence is that of Vacuolar protein sorting-associated protein atg6 (atg6) from Schizosaccharomyces pombe (strain 972 / ATCC 24843) (Fission yeast).